A 246-amino-acid polypeptide reads, in one-letter code: Metallo-beta-lactamase IMP-1 (246 aa).

Residues Met-1–Ala-18 form the signal peptide. Zn(2+)-binding residues include His-95, His-97, Asp-99, His-157, and Cys-176. Residues Lys-179 and Asn-185 each contribute to the a beta-lactam site. His-215 is a Zn(2+) binding site.

It belongs to the metallo-beta-lactamase superfamily. Class-B beta-lactamase family. Monomer. It depends on Zn(2+) as a cofactor.

It is found in the periplasm. It carries out the reaction a beta-lactam + H2O = a substituted beta-amino acid. Inhibited by captopril stereoisomers, Hg(2+), Fe(2+), Cu(2+), chelating agents such as EDTA, dansyl derivatives, including dansyl-C4SH, bisthiazolidines, mercaptoacetic acid and by PMPC phosphonates. Inhibited by 3-(3-mercaptopropionylsulfanyl)-propionic acid pentafluorophenyl ester, via a covalent binding to Lys-179. Not susceptible to inactivation by the beta-lactamase-blocking agents clavulanic acid or cloxacillin. Class B beta-lactamase which confers resistance to the beta-lactam antibiotics, including penicillins, cephalosporins and carbapenems. Acts via hydrolysis of the beta-lactam ring. Has penicillin-, cephalosporin- and carbapenem-hydrolyzing activities. Has endoribonuclease activity, cleaving substrate RNAs preferentially between U/C and A, in vitro. This is Metallo-beta-lactamase IMP-1 from Serratia marcescens.